A 526-amino-acid polypeptide reads, in one-letter code: Probable fucosyltransferase 7 (526 aa).

Topologically, residues 1-4 (MKTK) are cytoplasmic. Residues 5–25 (LMITIFSCLLLWSMLLLLSFS) form a helical; Signal-anchor for type II membrane protein membrane-spanning segment. Residues 26–526 (NIFKHQLLGA…KLVDDTKNEL (501 aa)) are Lumenal-facing. 3 N-linked (GlcNAc...) asparagine glycosylation sites follow: Asn-211, Asn-215, and Asn-363.

The protein belongs to the glycosyltransferase 37 family. Expressed in roots, leaves, stems and seedlings.

The protein resides in the golgi apparatus. Its subcellular location is the golgi stack membrane. The protein operates within protein modification; protein glycosylation. May be involved in cell wall biosynthesis. May act as a fucosyltransferase. This is Probable fucosyltransferase 7 (FUT7) from Arabidopsis thaliana (Mouse-ear cress).